A 481-amino-acid polypeptide reads, in one-letter code: Glutamate--tRNA ligase 2 (481 aa).

The 'HIGH' region motif lies at 17–27; sequence PSPTGFLHIGG. Over residues 118-139 the composition is skewed to basic and acidic residues; the sequence is AEQRAKKQPQRYDGRWRDRDPS. The interval 118–143 is disordered; it reads AEQRAKKQPQRYDGRWRDRDPSEAPA. A 'KMSKS' region motif is present at residues 246-250; that stretch reads KLSKR. ATP is bound at residue K249.

The protein belongs to the class-I aminoacyl-tRNA synthetase family. Glutamate--tRNA ligase type 1 subfamily. In terms of assembly, monomer.

The protein resides in the cytoplasm. It carries out the reaction tRNA(Glu) + L-glutamate + ATP = L-glutamyl-tRNA(Glu) + AMP + diphosphate. Catalyzes the attachment of glutamate to tRNA(Glu) in a two-step reaction: glutamate is first activated by ATP to form Glu-AMP and then transferred to the acceptor end of tRNA(Glu). In Zymomonas mobilis subsp. mobilis (strain ATCC 31821 / ZM4 / CP4), this protein is Glutamate--tRNA ligase 2.